An 84-amino-acid polypeptide reads, in one-letter code: Gas vesicle protein M1 (84 aa).

Residues 1–25 are interacts with GvpL1; sequence MEPTKDETHAIVEFVDVLLRDGAVI. The interval 5–21 is alpha helix 1; sequence KDETHAIVEFVDVLLRD. 2 beta-strand regions span residues 27 to 29 and 41 to 43; these read ADV and ISL. Positions 44 to 48 match the Conserved in GvpJ1/2 but not GvpA motif; it reads RAAIA. Alpha helix regions lie at residues 46–56 and 62–84; these read AIAGMTTMTEY and WDAA…RRED.

Belongs to the gas vesicle GvpA family. As to quaternary structure, gvpF to GvpM interact with each other in vitro, and may form multi-subunit complex(es). Might interact with GvpA1.

The protein localises to the gas vesicle. Its function is as follows. Proteins GvpF to GvpM might be involved in nucleating gas vesicle formation. A minor component of the gas vesicle. Gas vesicles are hollow, gas filled proteinaceous nanostructures found in several microbial planktonic microorganisms. They allow positioning of halobacteria at the optimal depth for growth in the poorly aerated, shallow brine pools of their habitat. In terms of biological role, expression of a 9.5 kb p-vac DNA fragment containing 2 divergently transcribed regions (gvpD-gvpE-gvpF-gvpG-gvpH-gvpI-gvpJ-gvpK-gvpL-gvpM and gvpA-gvpC-gvpN-gvpO) allows H.volcanii to produce gas vesicles. All site-directed mutagenesis is tested in H.volcanii. A minimal gas vesicle can be made in H.volcanii by gvpA1-gvpO1 plus gvpF1-gvpG1-gvpJ1-gvpK1-gvpL1-gvpM1; lack of enough GvpJ1 prevents formation. A similar region restores gas vesicle production in H.halobium without the p-vac locus, but it still has the c-vac locus. The chain is Gas vesicle protein M1 (gvpM11) from Halobacterium salinarum (strain ATCC 700922 / JCM 11081 / NRC-1) (Halobacterium halobium).